The chain runs to 655 residues: p-hydroxybenzoic acid efflux pump subunit AaeB (655 aa).

11 helical membrane passes run 13–33, 38–58, 69–89, 93–113, 121–141, 152–172, 370–390, 407–427, 431–451, 459–479, and 482–502; these read FAVK…HFQL, WAVL…GGEP, LRII…IAMI, LLMI…SSLV, WGLA…EPLL, EIVI…PRSI, LFWL…IAVV, FIYG…VIIP, QSML…GIEV, MGAL…TFHF, and FLDS…VILL.

This sequence belongs to the aromatic acid exporter ArAE (TC 2.A.85) family.

The protein resides in the cell inner membrane. Its function is as follows. Forms an efflux pump with AaeA. Could function as a metabolic relief valve, allowing to eliminate certain compounds when they accumulate to high levels in the cell. The chain is p-hydroxybenzoic acid efflux pump subunit AaeB from Escherichia coli O81 (strain ED1a).